Here is a 311-residue protein sequence, read N- to C-terminus: Metal-staphylopine import system permease protein CntB (311 aa).

Helical transmembrane passes span Ile-9–Ile-29, Leu-105–Ala-125, Val-139–Val-159, Gly-173–Phe-193, Ile-237–Ala-257, and Phe-274–Leu-294. Residues Phe-99–Ala-295 enclose the ABC transmembrane type-1 domain.

It belongs to the binding-protein-dependent transport system permease family. As to quaternary structure, the complex is composed of two ATP-binding proteins (CntD and CntF), two transmembrane proteins (CntB and CntC) and a solute-binding protein (CntA).

It localises to the cell membrane. With respect to regulation, nickel/cobalt import is reduced in the presence of zinc. Its function is as follows. Part of the ABC transporter complex CntABCDF (Opp1) involved in the uptake of metal in complex with the metallophore staphylopine (StP). Involved in the import of divalent metals ions such as nickel, cobalt and zinc. Probably responsible for the translocation of the substrate across the membrane. Plays a major role in nickel/cobalt import in zinc-depleted conditions. Contributes to virulence. Required for full urease activity in vitro. The polypeptide is Metal-staphylopine import system permease protein CntB (Staphylococcus aureus (strain NCTC 8325 / PS 47)).